The chain runs to 381 residues: MKQFKRGIERDGTGFVVLMAEEAEDMWHIYNLIRIGDIIKASTIRKVVSETSTGTTSSQRVHTMLTVSVESIDFDPGAQELHLKGRNIEENDIVKLGAYHTIDLEPNRKFTLQKTEWDSIDLERLNLALDPAQAADVAAVVLHEGLANVCLITPAMTLTRAKIDMTIPRKRKGFTSQHEKGLEKFYEAVSTAFMRHVNLQVVKCVIVASRGFVKDAFMQHLIAHADANGKKFTTEQRAKFMLTHSSSGFKHALKEVLETPQVALRLADTKAQGEVKALNQFLELMSTEPDRAFYGFNHVNRANQELAIETLLVADSLFRAQDIETRRKYVRLVESVREQNGKVHIFSSMHVSGEQLAQLTGCAAILRFPMPDLDDEPMDEN.

Belongs to the eukaryotic release factor 1 family. Pelota subfamily. As to quaternary structure, component of the Pelota-HBS1L complex, also named Dom34-Hbs1 complex, composed of pelo-1 and hbs-1. It depends on a divalent metal cation as a cofactor.

The protein localises to the cytoplasm. It is found in the nucleus. Component of the Pelota-HBS1L complex, a complex that recognizes stalled ribosomes and triggers the No-Go Decay (NGD) pathway. In the Pelota-HBS1L complex, pelo-1 recognizes ribosomes stalled at the 3' end of an mRNA and engages stalled ribosomes by destabilizing mRNA in the mRNA channel. Following ribosome-binding, the Pelota-HBS1L complex promotes the disassembly of stalled ribosomes, followed by degradation of damaged mRNAs as part of the NGD pathway. This Caenorhabditis elegans protein is Protein pelota homolog.